A 185-amino-acid chain; its full sequence is CASP-like protein 2C1 (185 aa).

The Cytoplasmic portion of the chain corresponds to 1-12; it reads MVAARVSEVKAE. The helical transmembrane segment at 13 to 33 threads the bilayer; it reads GVLRGACAALAAAAALLVGLS. The Extracellular portion of the chain corresponds to 34 to 52; the sequence is TQTETVLLVRKKATVKDVQ. The chain crosses the membrane as a helical span at residues 53 to 73; that stretch reads ALWVLAMAAAAAAGYHLLQLL. The Cytoplasmic segment spans residues 74–105; sequence KCFYLGRRVGGGASPCRRSSRALAWTCLLLDK. Residues 106–126 form a helical membrane-spanning segment; sequence ACAYTTFATTVAAAQACVIAL. The Extracellular segment spans residues 127–147; it reads DGAHALQWTKLCNIYTRFCEQ. A helical membrane pass occupies residues 148 to 168; sequence IAGSLVLGMLAAVGTAVLSAA. The Cytoplasmic portion of the chain corresponds to 169 to 185; it reads SARNVFRHYSPGTYAAH.

It belongs to the Casparian strip membrane proteins (CASP) family. In terms of assembly, homodimer and heterodimers.

The protein resides in the cell membrane. This Sorghum bicolor (Sorghum) protein is CASP-like protein 2C1.